Here is a 204-residue protein sequence, read N- to C-terminus: Large ribosomal subunit protein uL4 (204 aa).

The segment at 56–79 is disordered; it reads VSGTTAKPYGQKRTGRARQGSLRS.

The protein belongs to the universal ribosomal protein uL4 family. In terms of assembly, part of the 50S ribosomal subunit.

Its function is as follows. One of the primary rRNA binding proteins, this protein initially binds near the 5'-end of the 23S rRNA. It is important during the early stages of 50S assembly. It makes multiple contacts with different domains of the 23S rRNA in the assembled 50S subunit and ribosome. Functionally, forms part of the polypeptide exit tunnel. This chain is Large ribosomal subunit protein uL4, found in Wolbachia pipientis subsp. Culex pipiens (strain wPip).